Here is a 157-residue protein sequence, read N- to C-terminus: Endoribonuclease YbeY (157 aa).

Residues His118, His122, and His128 each coordinate Zn(2+).

Belongs to the endoribonuclease YbeY family. It depends on Zn(2+) as a cofactor.

It localises to the cytoplasm. Functionally, single strand-specific metallo-endoribonuclease involved in late-stage 70S ribosome quality control and in maturation of the 3' terminus of the 16S rRNA. This Shewanella loihica (strain ATCC BAA-1088 / PV-4) protein is Endoribonuclease YbeY.